The chain runs to 204 residues: Peptide deformylase (204 aa).

Fe cation contacts are provided by C131 and H174. E175 is an active-site residue. A Fe cation-binding site is contributed by H178.

It belongs to the polypeptide deformylase family. The cofactor is Fe(2+).

It catalyses the reaction N-terminal N-formyl-L-methionyl-[peptide] + H2O = N-terminal L-methionyl-[peptide] + formate. Removes the formyl group from the N-terminal Met of newly synthesized proteins. Requires at least a dipeptide for an efficient rate of reaction. N-terminal L-methionine is a prerequisite for activity but the enzyme has broad specificity at other positions. The protein is Peptide deformylase of Streptococcus mutans serotype c (strain ATCC 700610 / UA159).